Reading from the N-terminus, the 211-residue chain is Putative transposase for insertion sequence element IS402 (211 aa).

Residues 51 to 71 (RRWGRPKTGPNPTDRARPGSK) form a disordered region.

The protein belongs to the transposase 11 family.

Its function is as follows. Involved in the transposition of the insertion sequence. This Burkholderia cepacia (Pseudomonas cepacia) protein is Putative transposase for insertion sequence element IS402.